The following is a 522-amino-acid chain: Type-2 serine--tRNA ligase (522 aa).

Residue A319 participates in L-serine binding. C321 serves as a coordination point for Zn(2+). R350 contributes to the L-serine binding site. Residues R350–E352 and R361–V362 contribute to the ATP site. An L-serine-binding site is contributed by R367–E369. Zn(2+) contacts are provided by E369 and C476. R483 is an ATP binding site.

Belongs to the class-II aminoacyl-tRNA synthetase family. Type-2 seryl-tRNA synthetase subfamily. Homodimer. The cofactor is Zn(2+).

The protein localises to the cytoplasm. It catalyses the reaction tRNA(Ser) + L-serine + ATP = L-seryl-tRNA(Ser) + AMP + diphosphate + H(+). It carries out the reaction tRNA(Sec) + L-serine + ATP = L-seryl-tRNA(Sec) + AMP + diphosphate + H(+). The protein operates within aminoacyl-tRNA biosynthesis; selenocysteinyl-tRNA(Sec) biosynthesis; L-seryl-tRNA(Sec) from L-serine and tRNA(Sec): step 1/1. Catalyzes the attachment of serine to tRNA(Ser). Is also able to aminoacylate tRNA(Sec) with serine, to form the misacylated tRNA L-seryl-tRNA(Sec), which will be further converted into selenocysteinyl-tRNA(Sec). The polypeptide is Type-2 serine--tRNA ligase (serS) (Methanococcus aeolicus (strain ATCC BAA-1280 / DSM 17508 / OCM 812 / Nankai-3)).